A 170-amino-acid polypeptide reads, in one-letter code: Ecotin (170 aa).

The signal sequence occupies residues 1–21 (MNKASVVFSGLLMAVSASAIA). Cys78 and Cys115 are joined by a disulfide.

Belongs to the protease inhibitor I11 (ecotin) family. As to quaternary structure, homodimer.

It is found in the periplasm. Its function is as follows. General inhibitor of pancreatic serine proteases: inhibits chymotrypsin, trypsin, elastases, factor X, kallikrein as well as a variety of other proteases. This chain is Ecotin, found in Serratia proteamaculans (strain 568).